The sequence spans 155 residues: Egg cell-secreted protein 1.5 (155 aa).

The signal sequence occupies residues 1–32 (MATKSTSKPLLLSFLMMSYLISTFHVITVAEG).

This sequence belongs to the plant egg cell-secreted peptide family. As to expression, restricted to female reproductive tissues, specifically accumulating in storage vesicles of the unfertilized egg cell.

The protein localises to the cytoplasmic vesicle. The protein resides in the secreted. In terms of biological role, involved in the regulation of gamete interactions during the double fertilization and to prevent multiple-pollen tube attraction; mediates the redistribution of the gamete fusogen HAP2/GCS1 to the cell surface after secretion upon sperm arrival. This Arabidopsis thaliana (Mouse-ear cress) protein is Egg cell-secreted protein 1.5 (EC1.5).